A 252-amino-acid chain; its full sequence is Triosephosphate isomerase (252 aa).

Residue 9–11 (NWK) coordinates substrate. His96 (electrophile) is an active-site residue. The active-site Proton acceptor is the Glu166. Residues Gly172, Ser212, and 233–234 (GG) contribute to the substrate site.

It belongs to the triosephosphate isomerase family. Homodimer.

The protein resides in the cytoplasm. The catalysed reaction is D-glyceraldehyde 3-phosphate = dihydroxyacetone phosphate. It participates in carbohydrate biosynthesis; gluconeogenesis. It functions in the pathway carbohydrate degradation; glycolysis; D-glyceraldehyde 3-phosphate from glycerone phosphate: step 1/1. In terms of biological role, involved in the gluconeogenesis. Catalyzes stereospecifically the conversion of dihydroxyacetone phosphate (DHAP) to D-glyceraldehyde-3-phosphate (G3P). The chain is Triosephosphate isomerase from Chlorobium chlorochromatii (strain CaD3).